The following is a 410-amino-acid chain: Peptidase T (410 aa).

His78 contacts Zn(2+). Residue Asp80 is part of the active site. Asp139 is a Zn(2+) binding site. Glu173 acts as the Proton acceptor in catalysis. Zn(2+)-binding residues include Glu174, Asp196, and His378.

The protein belongs to the peptidase M20B family. Requires Zn(2+) as cofactor.

The protein localises to the cytoplasm. The catalysed reaction is Release of the N-terminal residue from a tripeptide.. In terms of biological role, cleaves the N-terminal amino acid of tripeptides. In Shewanella woodyi (strain ATCC 51908 / MS32), this protein is Peptidase T.